A 215-amino-acid chain; its full sequence is Adenylate kinase (215 aa).

10–15 (GAGKGT) contacts ATP. The tract at residues 30–59 (STGDMLRAAVKAGTELGLKAKSVMDAGGLV) is NMP. AMP is bound by residues T31, R36, 57-59 (GLV), 85-88 (GFPR), and Q92. An LID region spans residues 122-159 (GRRVHPASGRVYHTEYNPPKVAGKDDVSGEELVQREDD). Residues R123 and 132–133 (VY) each bind ATP. R156 and R167 together coordinate AMP. G201 is a binding site for ATP.

The protein belongs to the adenylate kinase family. In terms of assembly, monomer.

It localises to the cytoplasm. The enzyme catalyses AMP + ATP = 2 ADP. It participates in purine metabolism; AMP biosynthesis via salvage pathway; AMP from ADP: step 1/1. Catalyzes the reversible transfer of the terminal phosphate group between ATP and AMP. Plays an important role in cellular energy homeostasis and in adenine nucleotide metabolism. The protein is Adenylate kinase of Ectopseudomonas mendocina (strain ymp) (Pseudomonas mendocina).